We begin with the raw amino-acid sequence, 206 residues long: MARYLGPKLKLSRREGTDLFLKSGVRAIESKCKIDNAPGVHGARKPRLSDYGLQLREKQKVRRMYGVLEKQFRNYYKESARLQGNTGENLLQLLEGRLDNVVYRMGFGATRAESRQLVSHKAVLVNGKVVNIPSFNVKASDVIAIREKAKKQSRIGAALEIAGQREVPTWVSVDATKMEGIFTRQPERSDLSAEINEQLIIELYSK.

The S4 RNA-binding domain maps to 96–156; the sequence is GRLDNVVYRM…EKAKKQSRIG (61 aa).

This sequence belongs to the universal ribosomal protein uS4 family. In terms of assembly, part of the 30S ribosomal subunit. Contacts protein S5. The interaction surface between S4 and S5 is involved in control of translational fidelity.

One of the primary rRNA binding proteins, it binds directly to 16S rRNA where it nucleates assembly of the body of the 30S subunit. Functionally, with S5 and S12 plays an important role in translational accuracy. The protein is Small ribosomal subunit protein uS4B of Psychromonas ingrahamii (strain DSM 17664 / CCUG 51855 / 37).